We begin with the raw amino-acid sequence, 473 residues long: Response regulator protein FleR (473 aa).

Residues 4 to 118 (KVLLVEDDRA…ALLDLVARHA (115 aa)) enclose the Response regulatory domain. Asp53 is subject to 4-aspartylphosphate. The region spanning 130–359 (PVALEPASRQ…LDNAIQRALI (230 aa)) is the Sigma-54 factor interaction domain. Residues 158-165 (GESGTGKE) and 221-230 (ADGGTILLDE) contribute to the ATP site.

Functionally, member of the two-component regulatory system FleS/FleR that regulates the expression of multiple genes involved in flagellar synthesis, adhesion, swarming, motility and antibiotic resistance. May function as a transcriptional activator by direct binding to a cis-acting sequence upstream of the target genes. In Pseudomonas aeruginosa (strain ATCC 15692 / DSM 22644 / CIP 104116 / JCM 14847 / LMG 12228 / 1C / PRS 101 / PAO1), this protein is Response regulator protein FleR.